Here is a 456-residue protein sequence, read N- to C-terminus: Senecionine N-oxygenase (456 aa).

Positions 1-22 (MFRKFVIMLVLSLLVAAGISQA) are cleaved as a signal peptide. 32-37 (GAGYSG) contacts FAD. 215–220 (GAGPSG) lines the NADP(+) pocket.

This sequence belongs to the FMO family. Homotetramer. The cofactor is FAD. Hemolymph.

The protein resides in the secreted. It catalyses the reaction senecionine + NADPH + O2 = senecionine N-oxide + NADP(+) + H2O. NADPH-dependent monooxygenase that detoxifies senecionine and similar plant alkaloids that are ingested by the larvae. Is active towards a narrow range of related substrates with highest activity towards senecionine, followed by seneciphylline, retrorsine, monocrotaline, senecivernine, axillarine and axillaridine. The chain is Senecionine N-oxygenase (sno1) from Tyria jacobaeae (Cinnabar moth).